Reading from the N-terminus, the 270-residue chain is Co-chaperone protein DjlA (270 aa).

At methionine 1–lysine 6 the chain is on the periplasmic side. The chain crosses the membrane as a helical span at residues leucine 7–histidine 30. Residues valine 31 to valine 270 are Cytoplasmic-facing. The region spanning aspartate 204–valine 270 is the J domain.

As to quaternary structure, homodimer.

Its subcellular location is the cell inner membrane. Regulatory DnaK co-chaperone. Direct interaction between DnaK and DjlA is needed for the induction of the wcaABCDE operon, involved in the synthesis of a colanic acid polysaccharide capsule, possibly through activation of the RcsB/RcsC phosphotransfer signaling pathway. The colanic acid capsule may help the bacterium survive conditions outside the host. In Coxiella burnetii (strain RSA 493 / Nine Mile phase I), this protein is Co-chaperone protein DjlA.